We begin with the raw amino-acid sequence, 310 residues long: Olfactory receptor 4C16 (310 aa).

Residues 1 to 23 lie on the Extracellular side of the membrane; the sequence is MQLNNNVTEFILLGLTQDPFWKK. The N-linked (GlcNAc...) asparagine glycan is linked to Asn6. A helical membrane pass occupies residues 24 to 47; it reads IVFVIFLRLYLGTLLGNLLIIISV. Residues 48–55 lie on the Cytoplasmic side of the membrane; sequence KTSQALKN. Residues 56 to 77 form a helical membrane-spanning segment; the sequence is PMFFFLFYLSLSDTCLSTSITP. The Extracellular segment spans residues 78-98; sequence RMIVDALLKKTTISFSECMIQ. A disulfide bridge links Cys95 with Cys187. Residues 99 to 118 traverse the membrane as a helical segment; the sequence is VFSSHVFGCLEIFILILTAV. Topologically, residues 119 to 137 are cytoplasmic; that stretch reads DRYVDICKPLHYMTIISQW. The chain crosses the membrane as a helical span at residues 138–156; that stretch reads VCGVLMAVAWVGSCVHSLV. Over 157–193 the chain is Extracellular; that stretch reads QIFLALSLPFCGPNVINHCFCDLQPLLKQACSETYVV. Residues 194 to 217 traverse the membrane as a helical segment; that stretch reads NLLLVSNSGAICAVSYVMLIFSYV. At 218-233 the chain is on the cytoplasmic side; the sequence is IFLHSLRNHSAEVIKK. A helical transmembrane segment spans residues 234-256; it reads ALSTCVSHIIVVILFFGPCIFMY. Residues 257–267 are Extracellular-facing; the sequence is TCLATVFPMDK. Residues 268 to 287 form a helical membrane-spanning segment; the sequence is MIAVFYTVGTSFLNPVIYTL. Residues 288-310 lie on the Cytoplasmic side of the membrane; sequence KNTEVKSAMRKLWSKKLITDDKR.

It belongs to the G-protein coupled receptor 1 family.

It is found in the cell membrane. Functionally, odorant receptor. The sequence is that of Olfactory receptor 4C16 (OR4C16) from Homo sapiens (Human).